A 209-amino-acid polypeptide reads, in one-letter code: Uracil phosphoribosyltransferase (209 aa).

5-phospho-alpha-D-ribose 1-diphosphate contacts are provided by residues arginine 79, arginine 104, and aspartate 131 to serine 139. Uracil is bound by residues isoleucine 194 and glycine 199 to alanine 201. Aspartate 200 contacts 5-phospho-alpha-D-ribose 1-diphosphate.

It belongs to the UPRTase family. It depends on Mg(2+) as a cofactor.

It carries out the reaction UMP + diphosphate = 5-phospho-alpha-D-ribose 1-diphosphate + uracil. The protein operates within pyrimidine metabolism; UMP biosynthesis via salvage pathway; UMP from uracil: step 1/1. Its activity is regulated as follows. Allosterically activated by GTP. Its function is as follows. Catalyzes the conversion of uracil and 5-phospho-alpha-D-ribose 1-diphosphate (PRPP) to UMP and diphosphate. The protein is Uracil phosphoribosyltransferase of Finegoldia magna (strain ATCC 29328 / DSM 20472 / WAL 2508) (Peptostreptococcus magnus).